A 423-amino-acid polypeptide reads, in one-letter code: Glutamate--cysteine ligase EgtA (423 aa).

It belongs to the glutamate--cysteine ligase type 2 family. EgtA subfamily.

The catalysed reaction is L-cysteine + L-glutamate + ATP = gamma-L-glutamyl-L-cysteine + ADP + phosphate + H(+). It functions in the pathway amino-acid biosynthesis; ergothioneine biosynthesis. Functionally, catalyzes the synthesis of gamma-glutamylcysteine (gamma-GC). This compound is used as substrate for the biosynthesis of the low-molecular thiol compound ergothioneine. In Mycolicibacterium smegmatis (strain ATCC 700084 / mc(2)155) (Mycobacterium smegmatis), this protein is Glutamate--cysteine ligase EgtA.